Reading from the N-terminus, the 411-residue chain is LL-diaminopimelate aminotransferase (411 aa).

Substrate contacts are provided by Tyr-16 and Gly-43. Pyridoxal 5'-phosphate is bound by residues Tyr-73, 109–110 (AK), Tyr-133, Asn-188, Tyr-219, and 247–249 (SFS). 3 residues coordinate substrate: Lys-110, Tyr-133, and Asn-188. An N6-(pyridoxal phosphate)lysine modification is found at Lys-250. Residues Arg-258 and Asn-293 each contribute to the pyridoxal 5'-phosphate site. Residues Asn-293 and Arg-389 each coordinate substrate.

This sequence belongs to the class-I pyridoxal-phosphate-dependent aminotransferase family. LL-diaminopimelate aminotransferase subfamily. Homodimer. It depends on pyridoxal 5'-phosphate as a cofactor.

It catalyses the reaction (2S,6S)-2,6-diaminopimelate + 2-oxoglutarate = (S)-2,3,4,5-tetrahydrodipicolinate + L-glutamate + H2O + H(+). It functions in the pathway amino-acid biosynthesis; L-lysine biosynthesis via DAP pathway; LL-2,6-diaminopimelate from (S)-tetrahydrodipicolinate (aminotransferase route): step 1/1. In terms of biological role, involved in the synthesis of meso-diaminopimelate (m-DAP or DL-DAP), required for both lysine and peptidoglycan biosynthesis. Catalyzes the direct conversion of tetrahydrodipicolinate to LL-diaminopimelate. This Methanobrevibacter smithii (strain ATCC 35061 / DSM 861 / OCM 144 / PS) protein is LL-diaminopimelate aminotransferase.